A 167-amino-acid polypeptide reads, in one-letter code: 6,7-dimethyl-8-ribityllumazine synthase (167 aa).

5-amino-6-(D-ribitylamino)uracil-binding positions include phenylalanine 23, 57-59 (TYE), and 81-83 (AVI). 86 to 87 (GT) provides a ligand contact to (2S)-2-hydroxy-3-oxobutyl phosphate. Catalysis depends on histidine 89, which acts as the Proton donor. Phenylalanine 119 contributes to the 5-amino-6-(D-ribitylamino)uracil binding site. Position 133 (arginine 133) interacts with (2S)-2-hydroxy-3-oxobutyl phosphate.

It belongs to the DMRL synthase family.

The enzyme catalyses (2S)-2-hydroxy-3-oxobutyl phosphate + 5-amino-6-(D-ribitylamino)uracil = 6,7-dimethyl-8-(1-D-ribityl)lumazine + phosphate + 2 H2O + H(+). The protein operates within cofactor biosynthesis; riboflavin biosynthesis; riboflavin from 2-hydroxy-3-oxobutyl phosphate and 5-amino-6-(D-ribitylamino)uracil: step 1/2. Catalyzes the formation of 6,7-dimethyl-8-ribityllumazine by condensation of 5-amino-6-(D-ribitylamino)uracil with 3,4-dihydroxy-2-butanone 4-phosphate. This is the penultimate step in the biosynthesis of riboflavin. The polypeptide is 6,7-dimethyl-8-ribityllumazine synthase (Myxococcus xanthus (strain DK1622)).